A 552-amino-acid chain; its full sequence is Chaperonin GroEL 3 (552 aa).

Residues 30–33 (TLGP), Lys-51, 87–91 (DGTTT), Gly-415, and Asp-495 contribute to the ATP site.

The protein belongs to the chaperonin (HSP60) family. As to quaternary structure, forms a cylinder of 14 subunits composed of two heptameric rings stacked back-to-back. Interacts with the co-chaperonin GroES.

It is found in the cytoplasm. It catalyses the reaction ATP + H2O + a folded polypeptide = ADP + phosphate + an unfolded polypeptide.. Functionally, together with its co-chaperonin GroES, plays an essential role in assisting protein folding. The GroEL-GroES system forms a nano-cage that allows encapsulation of the non-native substrate proteins and provides a physical environment optimized to promote and accelerate protein folding. This chain is Chaperonin GroEL 3, found in Mesorhizobium japonicum (strain LMG 29417 / CECT 9101 / MAFF 303099) (Mesorhizobium loti (strain MAFF 303099)).